A 256-amino-acid chain; its full sequence is MPRSRALILGVLALTTMLSLCGGEDDIEADHVGSYGITVYQSPGDIGQYTFEFDGDELFYVDLDKKETVWMLPEFAQLRRFEPQGGLQNIATGKHNLEILTKRSNSTPATNEAPQATVFPKSPVLLGQPNTLICFVDNIFPPVINITWLRNSKSVTDGVYETSFFVNRDYSFHKLSYLTFIPSDDDIYDCKVEHWGLEEPVLKHWEPEIPAPMSELTETVVCALGLSVGLVGIVVGTIFIIQGLRSGGTSRHPGPL.

An N-terminal signal peptide occupies residues 1-23 (MPRSRALILGVLALTTMLSLCGG). An alpha-1 region spans residues 24-111 (EDDIEADHVG…KRSNSTPATN (88 aa)). The Extracellular portion of the chain corresponds to 24 to 218 (EDDIEADHVG…IPAPMSELTE (195 aa)). 2 N-linked (GlcNAc...) asparagine glycosylation sites follow: N105 and N145. The tract at residues 112–205 (EAPQATVFPK…GLEEPVLKHW (94 aa)) is alpha-2. The 93-residue stretch at 114–206 (PQATVFPKSP…LEEPVLKHWE (93 aa)) folds into the Ig-like C1-type domain. Cysteines 134 and 190 form a disulfide. Residues 206 to 218 (EPEIPAPMSELTE) are connecting peptide. Residues 219-241 (TVVCALGLSVGLVGIVVGTIFII) traverse the membrane as a helical segment. The Cytoplasmic portion of the chain corresponds to 242 to 256 (QGLRSGGTSRHPGPL).

It belongs to the MHC class II family.

It is found in the membrane. The protein is H-2 class II histocompatibility antigen, A-K alpha chain (H2-Aa) of Mus musculus (Mouse).